The sequence spans 770 residues: Kinesin-like protein klpA (770 aa).

The disordered stretch occupies residues 1-152 (MENVQSRMQG…GLGKRGEWDQ (152 aa)). Over residues 85-105 (SSTLTRSASAASRPRGPLSSS) the composition is skewed to low complexity. A compositionally biased stretch (polar residues) spans 106-119 (TSGRPKTSMSTSRR). Residues 134 to 152 (THQEERSYGGLGKRGEWDQ) are compositionally biased toward basic and acidic residues. Residues 175-425 (QESSGLKDAL…QELKGNIRVF (251 aa)) are a coiled coil. The Kinesin motor domain maps to 421-756 (NIRVFCRVRP…LKFATKVHNT (336 aa)). 514–521 (GQTGSGKT) is an ATP binding site.

It belongs to the TRAFAC class myosin-kinesin ATPase superfamily. Kinesin family. NCD subfamily.

Its subcellular location is the cytoplasm. The protein resides in the cytoskeleton. This is Kinesin-like protein klpA (klpA) from Emericella nidulans (strain FGSC A4 / ATCC 38163 / CBS 112.46 / NRRL 194 / M139) (Aspergillus nidulans).